Reading from the N-terminus, the 545-residue chain is Afadin- and alpha-actinin-binding protein B (545 aa).

Coiled coils occupy residues 106–287 and 358–442; these read RSKE…SQRK and ARGD…AIRL. Residues 497–545 form a disordered region; it reads HDRHLASSGDHYQRPRKTLPITPSSKHSLTQRESVAWRDSSISPNGTDF. Composition is skewed to polar residues over residues 517 to 529 and 536 to 545; these read ITPSSKHSLTQRE and SSISPNGTDF.

The protein belongs to the ADIP family. In terms of assembly, interacts with WRAP73.

Its subcellular location is the cell junction. It localises to the adherens junction. The protein localises to the cytoplasm. It is found in the cytoskeleton. The protein resides in the microtubule organizing center. Its subcellular location is the centrosome. It localises to the centriolar satellite. In terms of biological role, belongs to an adhesion system, which plays a role in the organization of homotypic, interneuronal and heterotypic cell-cell adherens junctions (AJs). Involved in cell movement. Acts as a centrosome maturation factor, probably by maintaining the integrity of the pericentriolar material and proper microtubule nucleation at mitotic spindle poles. The function seems to implicate at least in part WRAP73; the SSX2IP:WRAP73 complex is proposed to act as regulator of spindle anchoring at the mitotic centrosome. This chain is Afadin- and alpha-actinin-binding protein B (ssx2ip-b), found in Xenopus laevis (African clawed frog).